The sequence spans 128 residues: Small ribosomal subunit protein uS9 (128 aa).

Belongs to the universal ribosomal protein uS9 family. As to quaternary structure, part of the 30S ribosomal subunit. Contacts proteins S7 and S10.

In terms of biological role, part of the top of the head of the 30S subunit. The C-terminal region penetrates the head emerging in the P-site where it contacts tRNA. This Thermus thermophilus (strain ATCC BAA-163 / DSM 7039 / HB27) protein is Small ribosomal subunit protein uS9 (rpsI).